A 22-amino-acid chain; its full sequence is Putative lactoylglutathione lyase (22 aa).

The tract at residues 1–22 (ITACLDPDGWKEPGPLPGISTK) is disordered. The active-site Proton donor/acceptor is the E12.

It belongs to the glyoxalase I family. Zn(2+) serves as cofactor.

It carries out the reaction (R)-S-lactoylglutathione = methylglyoxal + glutathione. It functions in the pathway secondary metabolite metabolism; methylglyoxal degradation; (R)-lactate from methylglyoxal: step 1/2. Catalyzes the conversion of hemimercaptal, formed from methylglyoxal and glutathione, to S-lactoylglutathione. The sequence is that of Putative lactoylglutathione lyase from Pinus strobus (Eastern white pine).